A 426-amino-acid chain; its full sequence is 3-phosphoshikimate 1-carboxyvinyltransferase (426 aa).

The 3-phosphoshikimate site is built by Lys-22, Ser-23, and Arg-27. Residue Lys-22 participates in phosphoenolpyruvate binding. Gly-96 and Arg-124 together coordinate phosphoenolpyruvate. Positions 170, 171, 172, 198, 314, 337, and 341 each coordinate 3-phosphoshikimate. Gln-172 provides a ligand contact to phosphoenolpyruvate. Asp-314 functions as the Proton acceptor in the catalytic mechanism. Phosphoenolpyruvate-binding residues include Arg-345, Arg-387, and Lys-412.

Belongs to the EPSP synthase family. Monomer.

Its subcellular location is the cytoplasm. The enzyme catalyses 3-phosphoshikimate + phosphoenolpyruvate = 5-O-(1-carboxyvinyl)-3-phosphoshikimate + phosphate. Its pathway is metabolic intermediate biosynthesis; chorismate biosynthesis; chorismate from D-erythrose 4-phosphate and phosphoenolpyruvate: step 6/7. In terms of biological role, catalyzes the transfer of the enolpyruvyl moiety of phosphoenolpyruvate (PEP) to the 5-hydroxyl of shikimate-3-phosphate (S3P) to produce enolpyruvyl shikimate-3-phosphate and inorganic phosphate. This Vibrio atlanticus (strain LGP32) (Vibrio splendidus (strain Mel32)) protein is 3-phosphoshikimate 1-carboxyvinyltransferase.